The following is a 205-amino-acid chain: Holliday junction branch migration complex subunit RuvA (205 aa).

The interval 1 to 65 (MIAKLKGILD…EDRIHLFGFL (65 aa)) is domain I. Residues 66–144 (DNTEKVAFNM…NINTIANNTS (79 aa)) are domain II. The segment at 145-153 (LAILSTDSN) is flexible linker. A domain III region spans residues 154 to 205 (THDNILSDAITALIALGISRAEATQILSDIYALFPSISVNELVRTALQRRAK).

This sequence belongs to the RuvA family. Homotetramer. Forms an RuvA(8)-RuvB(12)-Holliday junction (HJ) complex. HJ DNA is sandwiched between 2 RuvA tetramers; dsDNA enters through RuvA and exits via RuvB. An RuvB hexamer assembles on each DNA strand where it exits the tetramer. Each RuvB hexamer is contacted by two RuvA subunits (via domain III) on 2 adjacent RuvB subunits; this complex drives branch migration. In the full resolvosome a probable DNA-RuvA(4)-RuvB(12)-RuvC(2) complex forms which resolves the HJ.

The protein resides in the cytoplasm. The RuvA-RuvB-RuvC complex processes Holliday junction (HJ) DNA during genetic recombination and DNA repair, while the RuvA-RuvB complex plays an important role in the rescue of blocked DNA replication forks via replication fork reversal (RFR). RuvA specifically binds to HJ cruciform DNA, conferring on it an open structure. The RuvB hexamer acts as an ATP-dependent pump, pulling dsDNA into and through the RuvAB complex. HJ branch migration allows RuvC to scan DNA until it finds its consensus sequence, where it cleaves and resolves the cruciform DNA. The polypeptide is Holliday junction branch migration complex subunit RuvA (Orientia tsutsugamushi (strain Boryong) (Rickettsia tsutsugamushi)).